The chain runs to 432 residues: C2H2 type master regulator of conidiophore development brlA (432 aa).

2 disordered regions span residues 22–72 (SNEC…RTPG) and 238–260 (KQHS…ADTP). The span at 29-44 (TSSFSPLESPTPTPTS) shows a compositional bias: low complexity. Composition is skewed to polar residues over residues 62 to 72 (LPNNTYERTPG) and 238 to 252 (KQHS…CSLG). C2H2-type zinc fingers lie at residues 320 to 344 (FKCK…MKSH) and 350 to 375 (HVCW…TKTH). The interval 388-432 (LDENSPDYDPEFRGQLTPDGRPIYGSKLDDPIPGAGDMSLDGWDE) is disordered.

The protein resides in the nucleus. Its function is as follows. BrlA, abaA and wetA are pivotal regulators of conidiophore development and conidium maturation. They act individually and together to regulate their own expression and that of numerous other sporulation-specific genes. Binds promoters of target genes at brlA response elements (BREs) containing the conserved sequence 5'-(C/A)(A/G)AGGG(G/A)-3'. Controls the expression of the conidiophore-specific phenol oxidase ivoB. Controls the expression of the hydrophobin rodA. Mediates the developmental switch from the indeterminate, apical growth pattern of vegetative cells to the budding growth pattern of conidiophores. Expression of brlA leads to activation of abaA, wetA and stuA, cessation of vegetative growth, cellular vacuolization and spore formation. The polypeptide is C2H2 type master regulator of conidiophore development brlA (Emericella nidulans (strain FGSC A4 / ATCC 38163 / CBS 112.46 / NRRL 194 / M139) (Aspergillus nidulans)).